The following is a 405-amino-acid chain: MENIMTLPKIKHVRAWFIGGATAEKGAGGGDYHDQGGNHWIDDHIATPMSKYRDYEQSRQSFGINVLGTLIVEVEAENGQTGFAVSTAGEMGCFIVEKHLNRFIEGKCVSDIKLIHDQMLGATMYYSGSGGLVMNTISCVDLALWDLFGKVVGLPVYKLLGGAVRDEIQFYATGARPDLAKEMGFIGGKMPTHWGPHDGDAGIRKDAAMVADMREKCGPDFWLMLDCWMSQDVNYATKLAHACAPFNLKWIEECLPPQQYEGYRELKRNAPAGMMVTSGEHHGTLQSFRTLAETGIDIMQPDVGWCGGLTTLVEIAALAKSRGQLVVPHGSSVYSHHAVITFTNTPFSEFLMTSPDCSTLRPQFDPILLDELVPVNGRIHKSVLDKPGFGVELNRDCHLKRPYSH.

Residues H33 and R59 each coordinate substrate. Mg(2+) is bound by residues D226, E252, and E280. H329 serves as the catalytic Proton acceptor. Residue E349 participates in substrate binding.

The protein belongs to the mandelate racemase/muconate lactonizing enzyme family. RhamD subfamily. Homooctamer; tetramer of dimers. The cofactor is Mg(2+).

It carries out the reaction L-rhamnonate = 2-dehydro-3-deoxy-L-rhamnonate + H2O. In terms of biological role, catalyzes the dehydration of L-rhamnonate to 2-keto-3-deoxy-L-rhamnonate (KDR). This chain is L-rhamnonate dehydratase, found in Salmonella paratyphi C (strain RKS4594).